The primary structure comprises 228 residues: Carboxylesterase SOBER1 (228 aa).

Active-site charge relay system residues include Ser106, Asp160, and His192.

This sequence belongs to the AB hydrolase superfamily. AB hydrolase 2 family.

Functionally, possesses carboxylesterase activity in vitro with a preference for short acyl chain substrates. Functions as a negative regulator of the hypersensitive response (HR) triggered by the bacterial type III effector protein AvrBsT. Possesses phospholipase A2 (PLA2) activity and hydrolyzes phosphatidylcholine (PC), a lipid that is hydrolyzed by phospholipase D (PLD) to produce phosphatidic acid (PA). Required to suppress AvrBsT-dependent HR and PLD-dependent production of PA in response to AvrBsT elicitation. This chain is Carboxylesterase SOBER1, found in Arabidopsis thaliana (Mouse-ear cress).